The sequence spans 549 residues: MAELIHSTIGRLLEQTADAYPDRDAVVYPDRNIRYTYAQFDSLCRQTAKGLMRMGIGKGDHVAIWASNISEWLAVQFATAKIGAVLVTVNTNYQAHELDYLLKQSDAAALIIMDSYRGTSYPDIVNSLIPELQEAKPGQLKSERYPFLKTLIYIGNKRLSGMYHWDDTEILAKTVTDAELEERMNSLDKDNVINMQYTSGTTGFPKGVMLTHFNVINNAANIAECMALTSQDRMCIPVPFFHCFGCVLGVLACVSVGAAMIPVQEFDPVTVLKTVEKEKCTVLHGVPTMFIAELHHPDFDAYDLSTLRTGIMAGSPCPSEVMKAVIERMGMKDITIAYGQTEASPVITQTRANDSFIRRVETTGRALPHTEVKIVEPGTCQEVQRGMQGELCTRGYHVMKGYYKDKDATRKAINHDGWLFTGDLAVMDEDGYCRITGRLKDMLIRGGENIYPREIEEFLYQHPAVLDVQVVGVPDAKFGEEAAAWIKLKDGKSVSPDELKAYCKGKIARHKIPRYVIFTDDYPMTASGKIQKYKLREKTIEMFNLSSSQ.

ATP-binding positions include 198-206, D423, R438, and K529; that span reads TSGTTGFPK.

It belongs to the ATP-dependent AMP-binding enzyme family.

This Bacillus subtilis (strain 168) protein is Putative acyl-CoA synthetase YngI (yngI).